A 69-amino-acid chain; its full sequence is DNA gyrase inhibitor YacG (69 aa).

4 residues coordinate Zn(2+): cysteine 13, cysteine 16, cysteine 32, and cysteine 36.

The protein belongs to the DNA gyrase inhibitor YacG family. In terms of assembly, interacts with GyrB. Requires Zn(2+) as cofactor.

Functionally, inhibits all the catalytic activities of DNA gyrase by preventing its interaction with DNA. Acts by binding directly to the C-terminal domain of GyrB, which probably disrupts DNA binding by the gyrase. The polypeptide is DNA gyrase inhibitor YacG (Neisseria gonorrhoeae (strain ATCC 700825 / FA 1090)).